The chain runs to 256 residues: Necrosis-inducing protein NPP1 (256 aa).

The short motif at 111-121 (AIMYAWYFPKG) is the Conserved undecapeptide motif element. Residues 133-139 (GHRHEWE) carry the Conserved heptapeptide motif motif.

It belongs to the Necrosis inducing protein (NPP1) family.

It localises to the secreted. Secreted effector that acts as a pathogen-associated molecular pattern (PAMP) recognized by the plant immune system. This Phytophthora cinnamomi (Cinnamon fungus) protein is Necrosis-inducing protein NPP1.